Here is a 153-residue protein sequence, read N- to C-terminus: Vasotocin-neurophysin VT 1 (153 aa).

An N-terminal signal peptide occupies residues 1–19 (MPQCALLLSLLGLLALSSA). A disulfide bridge links cysteine 20 with cysteine 25. The residue at position 28 (glycine 28) is a Glycine amide. 7 disulfides stabilise this stretch: cysteine 41–cysteine 85, cysteine 44–cysteine 58, cysteine 52–cysteine 75, cysteine 59–cysteine 65, cysteine 92–cysteine 105, cysteine 99–cysteine 117, and cysteine 106–cysteine 111.

The protein belongs to the vasopressin/oxytocin family. Post-translationally, seven disulfide bonds are present in neurophysin.

The protein localises to the secreted. Vasotocin is probably an antidiuretic hormone. This Takifugu rubripes (Japanese pufferfish) protein is Vasotocin-neurophysin VT 1.